The following is a 149-amino-acid chain: 3-hydroxyacyl-[acyl-carrier-protein] dehydratase FabZ (149 aa).

Residue His-53 is part of the active site.

This sequence belongs to the thioester dehydratase family. FabZ subfamily.

The protein resides in the cytoplasm. The catalysed reaction is a (3R)-hydroxyacyl-[ACP] = a (2E)-enoyl-[ACP] + H2O. In terms of biological role, involved in unsaturated fatty acids biosynthesis. Catalyzes the dehydration of short chain beta-hydroxyacyl-ACPs and long chain saturated and unsaturated beta-hydroxyacyl-ACPs. The polypeptide is 3-hydroxyacyl-[acyl-carrier-protein] dehydratase FabZ (Polynucleobacter asymbioticus (strain DSM 18221 / CIP 109841 / QLW-P1DMWA-1) (Polynucleobacter necessarius subsp. asymbioticus)).